The following is a 954-amino-acid chain: Glycine dehydrogenase (decarboxylating) (954 aa).

K700 is subject to N6-(pyridoxal phosphate)lysine.

It belongs to the GcvP family. The glycine cleavage system is composed of four proteins: P, T, L and H. It depends on pyridoxal 5'-phosphate as a cofactor.

The enzyme catalyses N(6)-[(R)-lipoyl]-L-lysyl-[glycine-cleavage complex H protein] + glycine + H(+) = N(6)-[(R)-S(8)-aminomethyldihydrolipoyl]-L-lysyl-[glycine-cleavage complex H protein] + CO2. The glycine cleavage system catalyzes the degradation of glycine. The P protein binds the alpha-amino group of glycine through its pyridoxal phosphate cofactor; CO(2) is released and the remaining methylamine moiety is then transferred to the lipoamide cofactor of the H protein. The protein is Glycine dehydrogenase (decarboxylating) of Dinoroseobacter shibae (strain DSM 16493 / NCIMB 14021 / DFL 12).